A 276-amino-acid chain; its full sequence is NADH-cytochrome b5 reductase 2 (276 aa).

In terms of domain architecture, FAD-binding FR-type spans E15–N127. Residue K17 is modified to N6-acetyllysine. A Phosphotyrosine modification is found at Y18. FAD is bound by residues E107–D137 and L146–L181.

Belongs to the flavoprotein pyridine nucleotide cytochrome reductase family. The cofactor is FAD.

It carries out the reaction 2 Fe(III)-[cytochrome b5] + NADH = 2 Fe(II)-[cytochrome b5] + NAD(+) + H(+). NADH-cytochrome b5 reductases are involved in desaturation and elongation of fatty acids, cholesterol biosynthesis, drug metabolism, and, in erythrocyte, methemoglobin reduction. Responsible for NADH-dependent lucigenin chemiluminescence in spermatozoa by reducing both lucigenin and 2-[4-iodophenyl]-3-[4-nitrophenyl]-5-[2,4-disulfophenyl]-2H tetrazolium monosodium salt (WST-1). The polypeptide is NADH-cytochrome b5 reductase 2 (Cyb5r2) (Rattus norvegicus (Rat)).